The sequence spans 350 residues: 3-dehydroquinate synthase (350 aa).

Residues 106–110, 130–131, Lys143, and Lys152 each bind NAD(+); these read GVIGD and TS. Glu185, His246, and His263 together coordinate Zn(2+).

Belongs to the sugar phosphate cyclases superfamily. Dehydroquinate synthase family. Co(2+) is required as a cofactor. The cofactor is Zn(2+). NAD(+) serves as cofactor.

It is found in the cytoplasm. It catalyses the reaction 7-phospho-2-dehydro-3-deoxy-D-arabino-heptonate = 3-dehydroquinate + phosphate. It participates in metabolic intermediate biosynthesis; chorismate biosynthesis; chorismate from D-erythrose 4-phosphate and phosphoenolpyruvate: step 2/7. Functionally, catalyzes the conversion of 3-deoxy-D-arabino-heptulosonate 7-phosphate (DAHP) to dehydroquinate (DHQ). The polypeptide is 3-dehydroquinate synthase (Clostridium beijerinckii (strain ATCC 51743 / NCIMB 8052) (Clostridium acetobutylicum)).